We begin with the raw amino-acid sequence, 129 residues long: Glycine cleavage system H protein (129 aa).

The Lipoyl-binding domain maps to 24 to 106 (SYTVGITEHA…YGEGWFFRVM (83 aa)). Lysine 65 is subject to N6-lipoyllysine.

This sequence belongs to the GcvH family. The glycine cleavage system is composed of four proteins: P, T, L and H. (R)-lipoate is required as a cofactor.

Functionally, the glycine cleavage system catalyzes the degradation of glycine. The H protein shuttles the methylamine group of glycine from the P protein to the T protein. The chain is Glycine cleavage system H protein from Shewanella putrefaciens (strain CN-32 / ATCC BAA-453).